The following is a 562-amino-acid chain: Putative transport protein Spro_1639 (562 aa).

5 helical membrane passes run 8-28 (LLNG…LCLG), 37-57 (LGNS…HFAI), 66-86 (FMLF…SIFF), 94-114 (MLAL…GKLF), and 158-178 (HLSL…IFGA). 2 RCK C-terminal domains span residues 202–288 (LDTD…SFRN) and 290–373 (KEVF…KIGF). 5 helical membrane passes run 383-403 (LLAF…TIQF), 406-426 (FSFG…LGFL), 447-467 (FGLM…IGNS), 475-495 (MLIA…LFGA), and 541-561 (IANV…PGIL).

It belongs to the AAE transporter (TC 2.A.81) family. YbjL subfamily.

Its subcellular location is the cell membrane. This is Putative transport protein Spro_1639 from Serratia proteamaculans (strain 568).